The chain runs to 1199 residues: DNA-directed RNA polymerase subunit beta (1199 aa).

Residues 1175 to 1199 form a disordered region; it reads EEKKAHEAAAQATDGKSANSTDDKK. Over residues 1188–1199 the composition is skewed to polar residues; that stretch reads DGKSANSTDDKK.

It belongs to the RNA polymerase beta chain family. In terms of assembly, the RNAP catalytic core consists of 2 alpha, 1 beta, 1 beta' and 1 omega subunit. When a sigma factor is associated with the core the holoenzyme is formed, which can initiate transcription.

The enzyme catalyses RNA(n) + a ribonucleoside 5'-triphosphate = RNA(n+1) + diphosphate. Its function is as follows. DNA-dependent RNA polymerase catalyzes the transcription of DNA into RNA using the four ribonucleoside triphosphates as substrates. This chain is DNA-directed RNA polymerase subunit beta, found in Lacticaseibacillus casei (strain BL23) (Lactobacillus casei).